The following is a 109-amino-acid chain: Spermidine export protein MdtI (109 aa).

The next 4 helical transmembrane spans lie at 6–26, 36–56, 64–84, and 88–108; these read WVHAAWLAMAIVLEIVANVFL, FYGILSLAAVLAAFSALSQAV, AYALWGGFGIAATLAAGWVLF, and LNNKGWVGVVLLLIGMIMIKL.

This sequence belongs to the drug/metabolite transporter (DMT) superfamily. Small multidrug resistance (SMR) (TC 2.A.7.1) family. MdtI subfamily. In terms of assembly, forms a complex with MdtJ.

It localises to the cell inner membrane. Catalyzes the excretion of spermidine. In Citrobacter koseri (strain ATCC BAA-895 / CDC 4225-83 / SGSC4696), this protein is Spermidine export protein MdtI.